We begin with the raw amino-acid sequence, 527 residues long: MSSFLVAYDDESEEEDNNNNNNNNNNNNNNNIINNNNNNNNSNNQIKDEDNIYSYNNDTIISQSQVQPKTVTLGLNNKLNQKKIQQTQQIQEKDKLSSDFNFYNNNNNSNSNSNNDENDDFIYNSNNKKRNNIDNDAEEINEFRNPDLKNKPKSSHSLFSMLPTPKSSQNTTTTQQSSYSFPKPVNNNNNNNNNNNNNNNNNNNNNNNNNNNNNNNNNNSNNNDDEKDDDKSKKINENENTVNKKDNIENQNENQNEIENENENNNNEDTKKKINNSMIPGSLRKKLLKNQPKTKKSTTTTTTATTTTTTITSVKPITTEINNNNSNSNNLPSIPIGNEKSKINDNQDEEDENENDGLFFSFQQSSTNNKKPQQEEIDYSAYINNDDGDDDDDDDENENENDSQPEEEYEENKQQQQQEWTQEQIQQYWYMQQQEQQQQQQQQPFNLKSQQQYQHYHEYNNVGKIYEVNQSKMLEENNSFKILELRKTTQEQDRVLANIPKVSKSQRQKHTIGSLLGDYQTKKYKFE.

Disordered regions lie at residues Met1–Glu49, Asp99–Thr307, Thr319–Asn353, and Tyr382–Glu419. Residues Tyr8–Asn17 are compositionally biased toward acidic residues. Low complexity-rich tracts occupy residues Asn18 to Asn44 and Asp99 to Asn115. Basic and acidic residues predominate over residues Asn141–Asn150. Composition is skewed to low complexity over residues Ser167–Ser178 and Asn186–Asn222. The span at Asp229–Ile248 shows a compositional bias: basic and acidic residues. Residues Leu283–Lys296 show a composition bias toward basic residues. 2 stretches are compositionally biased toward low complexity: residues Ser297–Thr307 and Thr319–Asn330. The span at Asp386–Glu410 shows a compositional bias: acidic residues.

This is an uncharacterized protein from Dictyostelium discoideum (Social amoeba).